Consider the following 210-residue polypeptide: Outer surface protein C (210 aa).

The first 18 residues, 1–18 (MKKNTLSAILMTLFLFIS), serve as a signal peptide directing secretion. Cysteine 19 is lipidated: N-palmitoyl cysteine. Residue cysteine 19 is the site of S-diacylglycerol cysteine attachment.

Belongs to the OspC lipoprotein family. As to quaternary structure, homodimer. Binds human plasminogen on the bacterial surface, also binds human plasmin. Interacts with tick I.ricinus salivary protein Iric-1. Interacts with human complement C4 beta chain (C4B); whole bacteria bind to wells coated with C4b. Binding is inhibited by human complement factor C2.

It is found in the cell outer membrane. Its subcellular location is the cell surface. A major immunodominant protein in mammalian hosts. Required for the initial stages of mammalian infection. Interaction with tick I.ricinus salivary protein Salp15 protects the bacteria from antibody-mediated killing in vitro and in vivo. Inhibits macrophage-mediated phagocytosis of the bacteria. Binds human plasminogen; this probably confers an extracellular protease activity on the bacteria that allows it to traverse tissue. Binds human complement C4-B, which may inhibit the complement cascade. Experiments in mice suggest it may play another role after initial infection. The sequence is that of Outer surface protein C from Borreliella burgdorferi (strain ATCC 35210 / DSM 4680 / CIP 102532 / B31) (Borrelia burgdorferi).